A 200-amino-acid chain; its full sequence is ADP-ribose 1''-phosphate phosphatase (200 aa).

The 200-residue stretch at 1–200 folds into the Macro domain; it reads MDLPSVQSKI…EVTVVRPHGG (200 aa). Substrate contacts are provided by residues 15 to 17, 29 to 31, 36 to 41, and 169 to 175; these read GDL, ACN, WGKGIA, and FNAGLFG.

It belongs to the POA1 family.

It carries out the reaction ADP-alpha-D-ribose 1''-phosphate + H2O = ADP-D-ribose + phosphate. Its function is as follows. Highly specific phosphatase involved in the metabolism of ADP-ribose 1''-phosphate (Appr1p) which is produced as a consequence of tRNA splicing. In Neosartorya fischeri (strain ATCC 1020 / DSM 3700 / CBS 544.65 / FGSC A1164 / JCM 1740 / NRRL 181 / WB 181) (Aspergillus fischerianus), this protein is ADP-ribose 1''-phosphate phosphatase (poa1).